A 288-amino-acid polypeptide reads, in one-letter code: Centromere protein P (288 aa).

A coiled-coil region spans residues 1–71 (MDAELAEVRA…HLESELSFLS (71 aa)). Serine 38 carries the post-translational modification Phosphoserine.

This sequence belongs to the CENP-P/CTF19 family. Component of the CENPA-CAD complex, composed of CENPI, CENPK, CENPL, CENPO, CENPP, CENPQ, CENPR and CENPS. The CENPA-CAD complex interacts with the CENPA-NAC complex, at least composed of CENPA, CENPC, CENPH, CENPM, CENPN, CENPT and CENPU.

The protein localises to the nucleus. It localises to the chromosome. It is found in the centromere. Functionally, component of the CENPA-CAD (nucleosome distal) complex, a complex recruited to centromeres which is involved in assembly of kinetochore proteins, mitotic progression and chromosome segregation. May be involved in incorporation of newly synthesized CENPA into centromeres via its interaction with the CENPA-NAC complex. This chain is Centromere protein P (CENPP), found in Homo sapiens (Human).